The chain runs to 58 residues: Metallothionein (58 aa).

Residues 1-29 (MPDPCCIDKCECKEGGCKAGCKCTSCRCT) are beta. A divalent metal cation is bound by residues Cys-5, Cys-6, Cys-10, Cys-12, Cys-17, Cys-21, Cys-23, Cys-26, Cys-28, Cys-31, Cys-34, Cys-38, Cys-40, Cys-46, Cys-50, Cys-54, Cys-56, and Cys-57. The segment at 30-58 (PCEKCSSGCKCTTKEDCCKTCTKPCSCCP) is alpha.

This sequence belongs to the metallothionein superfamily. Type 3 family.

Functionally, metallothioneins have a high content of cysteine residues that bind various heavy metals. Class I MTS in marine crustacea are involved in the sequestration of elevated levels of heavy-metal ions. The sequence is that of Metallothionein from Carcinus maenas (Common shore crab).